The sequence spans 540 residues: MSTEIQTELHQAVELRRNFAIISHPDAGKTTLTEKLLLYGGAIHEAGAVKARRAQRKATSDWMAMEQQRGISITSTVLQFEYQNCQINLLDTPGHQDFSEDTYRTLAAADNAVMLIDVAKGLEPQTRKLFEVCKLRGLPIFTFINKLDRPGREPLELLDEIEQELGLQTYAVNWPIGMGDRFKGVFDRNKQQIHLFERSAHGSKEARDTTVELGDPRIEELLEEDLYYQLKNDLELLEGVGPELDLDLVHQGKMTPVFFGSAMTNFGVELFLKYFLNYALKPGVHISSVGEVAPTYPEFSGFVFKLQANMDPKHRDRVAFIRVCTGKFEKDMTVNHARTGKIVRLSRPQKLFAQERESIDVAYPGDVIGLNNPGVFAIGDTIYTGQKLEYEGIPYFSPELFATLRNPNPSKFKQFQKGISELREEGAVQIMYSVDEAKRDPIMAAVGQLQFEVVQFRLQNEYGVETILELLPYSVARWVDGGWEALNKVGRIFNTTTVKDSMNRPVLLFRNEWNCQQLQGDHPELKLSAIAPVFSSQTVE.

The tr-type G domain occupies 14–283 (ELRRNFAIIS…YFLNYALKPG (270 aa)). GTP contacts are provided by residues 23–30 (SHPDAGKT), 91–95 (DTPGH), and 145–148 (NKLD).

Belongs to the TRAFAC class translation factor GTPase superfamily. Classic translation factor GTPase family. PrfC subfamily.

It localises to the cytoplasm. Increases the formation of ribosomal termination complexes and stimulates activities of RF-1 and RF-2. It binds guanine nucleotides and has strong preference for UGA stop codons. It may interact directly with the ribosome. The stimulation of RF-1 and RF-2 is significantly reduced by GTP and GDP, but not by GMP. The polypeptide is Peptide chain release factor 3 (Trichormus variabilis (strain ATCC 29413 / PCC 7937) (Anabaena variabilis)).